The chain runs to 393 residues: Pyruvate dehydrogenase E1 component subunit alpha-2, mitochondrial (393 aa).

The N-terminal 28 residues, Met1–His28, are a transit peptide targeting the mitochondrion. His94, Tyr120, Arg121, Gly169, Val171, Asp200, Gly201, Ala202, Asn229, and Tyr231 together coordinate pyruvate. Tyr120, Arg121, Gly169, Val171, Asp200, Gly201, Ala202, and Asn229 together coordinate thiamine diphosphate. Asp200 is a Mg(2+) binding site. Mg(2+)-binding residues include Asn229 and Tyr231. Residue His295 participates in thiamine diphosphate binding.

Tetramer of 2 alpha and 2 beta subunits. Requires thiamine diphosphate as cofactor. Mg(2+) is required as a cofactor.

It localises to the mitochondrion matrix. It carries out the reaction N(6)-[(R)-lipoyl]-L-lysyl-[protein] + pyruvate + H(+) = N(6)-[(R)-S(8)-acetyldihydrolipoyl]-L-lysyl-[protein] + CO2. E1 activity is regulated by phosphorylation (inactivation) and dephosphorylation (activation) of the alpha subunit. Its function is as follows. The pyruvate dehydrogenase complex catalyzes the overall conversion of pyruvate to acetyl-CoA and CO(2). It contains multiple copies of three enzymatic components: pyruvate dehydrogenase (E1), dihydrolipoamide acetyltransferase (E2) and lipoamide dehydrogenase (E3). The chain is Pyruvate dehydrogenase E1 component subunit alpha-2, mitochondrial (IAR4) from Arabidopsis thaliana (Mouse-ear cress).